We begin with the raw amino-acid sequence, 330 residues long: 4-epi-cubebol synthase ((2E,6E)-farnesyl diphosphate cyclizing) (330 aa).

Mg(2+)-binding residues include aspartate 91 and glutamate 96. Residues 91–96 carry the DDXXXE motif motif; it reads DDAFCE. Position 184 (arginine 184) interacts with substrate. Residues asparagine 230 and serine 234 each contribute to the Mg(2+) site. Position 237 (lysine 237) interacts with substrate. Glutamate 238 serves as a coordination point for Mg(2+). 316-317 contributes to the substrate binding site; the sequence is RY.

This sequence belongs to the terpene synthase family. It depends on Mg(2+) as a cofactor.

It catalyses the reaction (2E,6E)-farnesyl diphosphate + H2O = 4-epi-cubebol + diphosphate. The protein operates within secondary metabolite biosynthesis; terpenoid biosynthesis. In terms of biological role, catalyzes the conversion of (2E,6E)-farnesyl diphosphate (FPP) to yield the bicyclic sesquiterpenol 4-epi-cubebol via a 1,10-cyclization, which requires the abstraction of the pyrophosphate from FPP to yield a (E,E)-germacradienyl cation. The only accepted substrate is (2E,6E)-farnesyl diphosphate (FPP). The protein is 4-epi-cubebol synthase ((2E,6E)-farnesyl diphosphate cyclizing) of Streptosporangium roseum (strain ATCC 12428 / DSM 43021 / JCM 3005 / KCTC 9067 / NCIMB 10171 / NRRL 2505 / NI 9100).